The sequence spans 154 residues: Putative NADPH-dependent 7-cyano-7-deazaguanine reductase (154 aa).

D52 (proton donor) is an active-site residue. Substrate-binding positions include 67 to 69 (VES) and 86 to 87 (HE).

The protein belongs to the GTP cyclohydrolase I family. QueF type 1 subfamily.

The protein resides in the cytoplasm. The catalysed reaction is 7-aminomethyl-7-carbaguanine + 2 NADP(+) = 7-cyano-7-deazaguanine + 2 NADPH + 3 H(+). It functions in the pathway tRNA modification; tRNA-queuosine biosynthesis. Catalyzes the NADPH-dependent reduction of 7-cyano-7-deazaguanine (preQ0) to 7-aminomethyl-7-deazaguanine (preQ1). The chain is Putative NADPH-dependent 7-cyano-7-deazaguanine reductase from Streptococcus pneumoniae serotype 4 (strain ATCC BAA-334 / TIGR4).